Consider the following 114-residue polypeptide: MSIGLLCCAALSLLWAGPVNAGVTQTPKFQVLKTGQSMTLQCAQDMNHEYMSWYRQDPGMGLRLIHYSVGAGITDQGEVPNGYNVSRSTTEDFPLRLLSAAPSQTSVYFCASSY.

A signal peptide spans 1 to 21 (MSIGLLCCAALSLLWAGPVNA). Residues 22–114 (GVTQTPKFQV…TSVYFCASSY (93 aa)) form the Ig-like domain. Cys42 and Cys110 are joined by a disulfide. A glycan (N-linked (GlcNAc...) asparagine) is linked at Asn84.

Alpha-beta TR is a heterodimer composed of an alpha and beta chain; disulfide-linked. The alpha-beta TR is associated with the transmembrane signaling CD3 coreceptor proteins to form the TR-CD3 (TcR or TCR). The assembly of alpha-beta TR heterodimers with CD3 occurs in the endoplasmic reticulum where a single alpha-beta TR heterodimer associates with one CD3D-CD3E heterodimer, one CD3G-CD3E heterodimer and one CD247 homodimer forming a stable octameric structure. CD3D-CD3E and CD3G-CD3E heterodimers preferentially associate with TR alpha and TR beta chains, respectively. The association of the CD247 homodimer is the last step of TcR assembly in the endoplasmic reticulum and is required for transport to the cell surface.

The protein localises to the cell membrane. In terms of biological role, v region of the variable domain of T cell receptor (TR) beta chain that participates in the antigen recognition. Alpha-beta T cell receptors are antigen specific receptors which are essential to the immune response and are present on the cell surface of T lymphocytes. Recognize peptide-major histocompatibility (MH) (pMH) complexes that are displayed by antigen presenting cells (APC), a prerequisite for efficient T cell adaptive immunity against pathogens. Binding of alpha-beta TR to pMH complex initiates TR-CD3 clustering on the cell surface and intracellular activation of LCK that phosphorylates the ITAM motifs of CD3G, CD3D, CD3E and CD247 enabling the recruitment of ZAP70. In turn ZAP70 phosphorylates LAT, which recruits numerous signaling molecules to form the LAT signalosome. The LAT signalosome propagates signal branching to three major signaling pathways, the calcium, the mitogen-activated protein kinase (MAPK) kinase and the nuclear factor NF-kappa-B (NF-kB) pathways, leading to the mobilization of transcription factors that are critical for gene expression and essential for T cell growth and differentiation. The T cell repertoire is generated in the thymus, by V-(D)-J rearrangement. This repertoire is then shaped by intrathymic selection events to generate a peripheral T cell pool of self-MH restricted, non-autoaggressive T cells. Post-thymic interaction of alpha-beta TR with the pMH complexes shapes TR structural and functional avidity. This chain is T cell receptor beta variable 6-5, found in Homo sapiens (Human).